A 161-amino-acid polypeptide reads, in one-letter code: Vitamin K epoxide reductase complex subunit 1 (161 aa).

At Met1–Gly9 the chain is on the cytoplasmic side. Residues Arg10–Val29 traverse the membrane as a helical segment. Over Lys30–Asn80 the chain is Lumenal. An intrachain disulfide couples Cys43 to Cys51. Asn80 serves as a coordination point for (S)-warfarin. The chain crosses the membrane as a helical span at residues Ser81 to Gly95. The Cytoplasmic segment spans residues Cys96–Arg100. Residues Trp101 to Leu128 traverse the membrane as a helical segment. Topologically, residues Tyr129–Phe131 are lumenal. A disulfide bridge connects residues Cys132 and Cys135. A helical membrane pass occupies residues Cys132–Val153. The phylloquinone site is built by Cys135 and Tyr139. Tyr139 provides a ligand contact to (S)-warfarin. At Pro154–Pro161 the chain is on the cytoplasmic side.

The protein belongs to the VKOR family. In terms of tissue distribution, highly expressed in liver. Detected at lower levels in lung, kidney and testis.

The protein resides in the endoplasmic reticulum membrane. The enzyme catalyses phylloquinone + [protein]-disulfide + H2O = 2,3-epoxyphylloquinone + [protein]-dithiol. The catalysed reaction is phylloquinol + [protein]-disulfide = phylloquinone + [protein]-dithiol. With respect to regulation, inhibited by warfarin (coumadin). Warfarin locks VKORC1 in both redox states into the closed conformation. Functionally, involved in vitamin K metabolism. Catalytic subunit of the vitamin K epoxide reductase (VKOR) complex which reduces inactive vitamin K 2,3-epoxide to active vitamin K. Vitamin K is required for the gamma-carboxylation of various proteins, including clotting factors, and is required for normal blood coagulation, but also for normal bone development. The polypeptide is Vitamin K epoxide reductase complex subunit 1 (Vkorc1) (Rattus norvegicus (Rat)).